Here is a 364-residue protein sequence, read N- to C-terminus: tRNA 2-selenouridine synthase (364 aa).

In terms of domain architecture, Rhodanese spans 14-137; the sequence is LLADTPLIDV…LRQTAIQATW (124 aa). The active-site S-selanylcysteine intermediate is the Cys-97.

It belongs to the SelU family. As to quaternary structure, monomer.

The enzyme catalyses 5-methylaminomethyl-2-thiouridine(34) in tRNA + selenophosphate + (2E)-geranyl diphosphate + H2O + H(+) = 5-methylaminomethyl-2-selenouridine(34) in tRNA + (2E)-thiogeraniol + phosphate + diphosphate. It carries out the reaction 5-methylaminomethyl-2-thiouridine(34) in tRNA + (2E)-geranyl diphosphate = 5-methylaminomethyl-S-(2E)-geranyl-thiouridine(34) in tRNA + diphosphate. It catalyses the reaction 5-methylaminomethyl-S-(2E)-geranyl-thiouridine(34) in tRNA + selenophosphate + H(+) = 5-methylaminomethyl-2-(Se-phospho)selenouridine(34) in tRNA + (2E)-thiogeraniol. The catalysed reaction is 5-methylaminomethyl-2-(Se-phospho)selenouridine(34) in tRNA + H2O = 5-methylaminomethyl-2-selenouridine(34) in tRNA + phosphate. Functionally, involved in the post-transcriptional modification of the uridine at the wobble position (U34) of tRNA(Lys), tRNA(Glu) and tRNA(Gln). Catalyzes the conversion of 2-thiouridine (S2U-RNA) to 2-selenouridine (Se2U-RNA). Acts in a two-step process involving geranylation of 2-thiouridine (S2U) to S-geranyl-2-thiouridine (geS2U) and subsequent selenation of the latter derivative to 2-selenouridine (Se2U) in the tRNA chain. This is tRNA 2-selenouridine synthase from Salmonella paratyphi A (strain ATCC 9150 / SARB42).